The following is a 395-amino-acid chain: Flap endonuclease 1 (395 aa).

The tract at residues 1 to 104 is N-domain; sequence MGIKHLYQVI…GELAKRSARK (104 aa). Asp-34 contributes to the Mg(2+) binding site. The DNA site is built by Arg-47 and Arg-70. Asp-86 is a Mg(2+) binding site. Residues 94–124 are disordered; the sequence is GGELAKRSARKREAHEAHEEAKETGTAEDME. The I-domain stretch occupies residues 122–253; the sequence is DMEKFSRRTV…NTALKLIREH (132 aa). Mg(2+)-binding residues include Glu-158, Glu-160, Asp-179, and Asp-181. Glu-158 lines the DNA pocket. Residues Gly-231 and Asp-233 each contribute to the DNA site. Residue Asp-233 coordinates Mg(2+). The segment at 341 to 349 is interaction with PCNA; sequence QQSRLEGFF. A compositionally biased stretch (basic and acidic residues) spans 356–389; that stretch reads DAEKASMKRKHDEKIEEQKKRKKEDAKAKKEAKA. The tract at residues 356–395 is disordered; sequence DAEKASMKRKHDEKIEEQKKRKKEDAKAKKEAKARPRGAV.

It belongs to the XPG/RAD2 endonuclease family. FEN1 subfamily. Interacts with PCNA. Three molecules of fen1 bind to one PCNA trimer with each molecule binding to one PCNA monomer. PCNA stimulates the nuclease activity without altering cleavage specificity. Requires Mg(2+) as cofactor. Phosphorylated. Phosphorylation upon DNA damage induces relocalization to the nuclear plasma.

The protein resides in the nucleus. The protein localises to the nucleolus. It localises to the nucleoplasm. Its subcellular location is the mitochondrion. Functionally, structure-specific nuclease with 5'-flap endonuclease and 5'-3' exonuclease activities involved in DNA replication and repair. During DNA replication, cleaves the 5'-overhanging flap structure that is generated by displacement synthesis when DNA polymerase encounters the 5'-end of a downstream Okazaki fragment. It enters the flap from the 5'-end and then tracks to cleave the flap base, leaving a nick for ligation. Also involved in the long patch base excision repair (LP-BER) pathway, by cleaving within the apurinic/apyrimidinic (AP) site-terminated flap. Acts as a genome stabilization factor that prevents flaps from equilibrating into structures that lead to duplications and deletions. Also possesses 5'-3' exonuclease activity on nicked or gapped double-stranded DNA, and exhibits RNase H activity. Also involved in replication and repair of rDNA and in repairing mitochondrial DNA. In Talaromyces marneffei (strain ATCC 18224 / CBS 334.59 / QM 7333) (Penicillium marneffei), this protein is Flap endonuclease 1 (fen1).